A 516-amino-acid chain; its full sequence is Rho guanine nucleotide exchange factor 9 (516 aa).

An SH3 domain is found at Asp-8 to Asn-67. The interaction with GPHN stretch occupies residues Arg-100 to Glu-110. Positions Met-103 to Arg-287 constitute a DH domain. The PH domain occupies Glu-318–Lys-425. Positions Arg-450–Tyr-480 are disordered. Residue Ser-502 is modified to Phosphoserine.

Interacts with GPHN. In terms of tissue distribution, detected in embryonic and adult brain.

Its subcellular location is the cytoplasm. The protein localises to the postsynaptic density. In terms of biological role, acts as a guanine nucleotide exchange factor (GEF) for CDC42. Promotes formation of GPHN clusters. The protein is Rho guanine nucleotide exchange factor 9 (Arhgef9) of Mus musculus (Mouse).